Here is a 191-residue protein sequence, read N- to C-terminus: Protein YceI (191 aa).

The signal sequence occupies residues 1 to 22; that stretch reads MKKNLLGFTFASLLFTTGSAVA.

It belongs to the UPF0312 family. Type 1 subfamily.

It is found in the periplasm. This chain is Protein YceI, found in Salmonella agona (strain SL483).